A 409-amino-acid chain; its full sequence is Elongation factor Tu (409 aa).

The 205-residue stretch at 10 to 214 (KPHVNIGTIG…AVDAYIPTPE (205 aa)) folds into the tr-type G domain. The G1 stretch occupies residues 19-26 (GHVDHGKT). 19–26 (GHVDHGKT) provides a ligand contact to GTP. A Mg(2+)-binding site is contributed by T26. A G2 region spans residues 60–64 (GITIN). The G3 stretch occupies residues 81-84 (DCPG). Residues 81-85 (DCPGH) and 136-139 (NKKD) each bind GTP. Residues 136–139 (NKKD) form a G4 region. Residues 174–176 (SAL) are G5.

The protein belongs to the TRAFAC class translation factor GTPase superfamily. Classic translation factor GTPase family. EF-Tu/EF-1A subfamily. As to quaternary structure, monomer.

It localises to the cytoplasm. It carries out the reaction GTP + H2O = GDP + phosphate + H(+). Functionally, GTP hydrolase that promotes the GTP-dependent binding of aminoacyl-tRNA to the A-site of ribosomes during protein biosynthesis. This Gloeobacter violaceus (strain ATCC 29082 / PCC 7421) protein is Elongation factor Tu.